The following is a 145-amino-acid chain: Ornithine decarboxylase antizyme (145 aa).

The protein belongs to the ODC antizyme family. In terms of assembly, interacts with ODC1 and thereby sterically blocks ODC homodimerization.

In terms of biological role, ornithine decarboxylase (ODC) antizyme protein that negatively regulates ODC activity and intracellular polyamine biosynthesis and uptake in response to increased intracellular polyamine levels. Binds to ODC monomers, inhibiting the assembly of the functional ODC homodimer, and targets the monomers for ubiquitin-independent proteolytic destruction by the 26S proteasome. This Onchocerca volvulus protein is Ornithine decarboxylase antizyme.